The chain runs to 248 residues: tRNA pseudouridine synthase A (248 aa).

Residue Asp53 is the Nucleophile of the active site. Tyr111 contacts substrate.

The protein belongs to the tRNA pseudouridine synthase TruA family. As to quaternary structure, homodimer.

The enzyme catalyses uridine(38/39/40) in tRNA = pseudouridine(38/39/40) in tRNA. Formation of pseudouridine at positions 38, 39 and 40 in the anticodon stem and loop of transfer RNAs. In Listeria innocua serovar 6a (strain ATCC BAA-680 / CLIP 11262), this protein is tRNA pseudouridine synthase A.